Reading from the N-terminus, the 160-residue chain is Cyclic pyranopterin monophosphate synthase (160 aa).

Substrate is bound by residues 77 to 79 (LCH) and 115 to 116 (ME). D130 is a catalytic residue.

It belongs to the MoaC family. In terms of assembly, homohexamer; trimer of dimers.

It carries out the reaction (8S)-3',8-cyclo-7,8-dihydroguanosine 5'-triphosphate = cyclic pyranopterin phosphate + diphosphate. It functions in the pathway cofactor biosynthesis; molybdopterin biosynthesis. Its function is as follows. Catalyzes the conversion of (8S)-3',8-cyclo-7,8-dihydroguanosine 5'-triphosphate to cyclic pyranopterin monophosphate (cPMP). The protein is Cyclic pyranopterin monophosphate synthase of Parvibaculum lavamentivorans (strain DS-1 / DSM 13023 / NCIMB 13966).